A 200-amino-acid polypeptide reads, in one-letter code: MSETNHPRLILRSKRARALMALPFAISIPRDPPDSIMIARELFNDFKLSIIATVGDVVSLNVATYWRRPDLRVIDLNTRRGTVIQHSDMDGVVYRVRNERSTLSYESFNIMRSAYANVLSGNRVTIIVDGEEDLLAIPAVLEAPGNTGILYGLYTGYLVLIPAVNEYKILMLKLLTLLDRDECETLRNCNSVNNYGWKNS.

GTP-binding residues include D56, V57, V58, D75, and E132.

Belongs to the GTP-dependent DPCK family.

It carries out the reaction 3'-dephospho-CoA + GTP = GDP + CoA + H(+). It participates in cofactor biosynthesis; coenzyme A biosynthesis. Its function is as follows. Catalyzes the GTP-dependent phosphorylation of the 3'-hydroxyl group of dephosphocoenzyme A to form coenzyme A (CoA). This is GTP-dependent dephospho-CoA kinase from Caldivirga maquilingensis (strain ATCC 700844 / DSM 13496 / JCM 10307 / IC-167).